A 907-amino-acid chain; its full sequence is Leucine-rich repeat-containing G-protein coupled receptor 5 (907 aa).

The N-terminal stretch at 1 to 21 (MDTSRVRMLLSLLALLQLVAA) is a signal peptide. Over 22-561 (GSPPRPDTMP…EHLFGSWLIR (540 aa)) the chain is Extracellular. The LRRNT domain maps to 33–64 (GCPSYCHCELDGRMLLRVDCSDLGLSELPSNL). 2 disulfides stabilise this stretch: Cys34/Cys40 and Cys38/Cys52. LRR repeat units follow at residues 44-64 (GRML…PSNL), 65-88 (SVFT…LLHR), 89-112 (LRFL…AFAG), 114-136 (HSLK…ALQN), 137-160 (LRSL…CFSG), 162-184 (HSLR…AFRS), 186-208 (SALQ…AFGN), 209-232 (LSSL…CFDG), 233-256 (LHSL…IKTL), 257-279 (SNLK…AFVG), 281-303 (PSLI…AFQH), 304-327 (LPEL…LTGT), 328-350 (ATLE…VCDQ), 351-375 (LPNL…GCQK), 377-396 (QKID…TFQQ), 397-420 (LFNL…AFST), and 422-444 (PSLI…GLHG). Asn63 and Asn77 each carry an N-linked (GlcNAc...) asparagine glycan. An N-linked (GlcNAc...) asparagine glycan is attached at Asn208. The cysteines at positions 348 and 373 are disulfide-linked. Residues Cys479 and Cys541 are joined by a disulfide bond. A helical membrane pass occupies residues 562-582 (IGVWTTAVLALSCNALVAFTV). An LRR 18 repeat occupies 564-585 (VWTTAVLALSCNALVAFTVFRT). Residues 583–595 (FRTPLYISSIKLL) lie on the Cytoplasmic side of the membrane. The chain crosses the membrane as a helical span at residues 596-616 (IGVIAVVDILMGVSSAILAVV). Residues 617–638 (DTFTFGSFAQHGAWWEGGIGCQ) lie on the Extracellular side of the membrane. The cysteines at positions 637 and 712 are disulfide-linked. The chain crosses the membrane as a helical span at residues 639–659 (IVGFLSIFASESSVFLLTLAA). The Cytoplasmic portion of the chain corresponds to 660-682 (LERGFSVKCSSKFEMKAPLSSLK). A helical membrane pass occupies residues 683 to 703 (AIILLCVLLALTIATVPLLGG). Over 704–723 (SEYNASPLCLPLPFGEPSTT) the chain is Extracellular. Residues 724–744 (GYMVALVLLNSLCFLIMTIAY) form a helical membrane-spanning segment. The Cytoplasmic portion of the chain corresponds to 745–775 (TRLYCSLEKGELENLWDCSMVKHTALLLFTN). The chain crosses the membrane as a helical span at residues 776-796 (CILYCPVAFLSFSSLLNLTFI). Topologically, residues 797–802 (SPEVIK) are extracellular. A helical transmembrane segment spans residues 803-823 (FILLVIVPLPACLNPLLYIVF). At 824–907 (NPHFKEDMGS…LSSVAFVPCL (84 aa)) the chain is on the cytoplasmic side.

It belongs to the G-protein coupled receptor 1 family. As to quaternary structure, identified in a complex composed of RNF43, LGR5 and RSPO1. Also interacts with other R-spondin ligands, including RSPO2, RSPO3 and RSPO4.

Its subcellular location is the cell membrane. It is found in the golgi apparatus. The protein resides in the trans-Golgi network membrane. Functionally, receptor for R-spondins that potentiates the canonical Wnt signaling pathway and acts as a stem cell marker of the intestinal epithelium and the hair follicle. Upon binding to R-spondins (RSPO1, RSPO2, RSPO3 or RSPO4), associates with phosphorylated LRP6 and frizzled receptors that are activated by extracellular Wnt receptors, triggering the canonical Wnt signaling pathway to increase expression of target genes. In contrast to classical G-protein coupled receptors, does not activate heterotrimeric G-proteins to transduce the signal. Involved in the development and/or maintenance of the adult intestinal stem cells during postembryonic development. The polypeptide is Leucine-rich repeat-containing G-protein coupled receptor 5 (Lgr5) (Rattus norvegicus (Rat)).